The sequence spans 98 residues: NADH-ubiquinone oxidoreductase chain 4L (98 aa).

Helical transmembrane passes span 1–21 (MSLT…GLLM), 30–50 (LLCL…TILI), and 61–81 (IILL…LVAV).

The protein belongs to the complex I subunit 4L family. Core subunit of respiratory chain NADH dehydrogenase (Complex I) which is composed of 45 different subunits.

Its subcellular location is the mitochondrion inner membrane. The enzyme catalyses a ubiquinone + NADH + 5 H(+)(in) = a ubiquinol + NAD(+) + 4 H(+)(out). Functionally, core subunit of the mitochondrial membrane respiratory chain NADH dehydrogenase (Complex I) which catalyzes electron transfer from NADH through the respiratory chain, using ubiquinone as an electron acceptor. Part of the enzyme membrane arm which is embedded in the lipid bilayer and involved in proton translocation. In Pipistrellus abramus (Japanese pipistrelle), this protein is NADH-ubiquinone oxidoreductase chain 4L (MT-ND4L).